Consider the following 175-residue polypeptide: Adenine phosphoribosyltransferase (175 aa).

It belongs to the purine/pyrimidine phosphoribosyltransferase family. In terms of assembly, homodimer.

The protein localises to the cytoplasm. The catalysed reaction is AMP + diphosphate = 5-phospho-alpha-D-ribose 1-diphosphate + adenine. It participates in purine metabolism; AMP biosynthesis via salvage pathway; AMP from adenine: step 1/1. Functionally, catalyzes a salvage reaction resulting in the formation of AMP, that is energically less costly than de novo synthesis. This chain is Adenine phosphoribosyltransferase, found in Lactobacillus johnsonii (strain CNCM I-12250 / La1 / NCC 533).